We begin with the raw amino-acid sequence, 240 residues long: Ribose-5-phosphate isomerase A (240 aa).

The disordered stretch occupies residues 1 to 23 (MKTSGGSDAAKRRAGESAAETVT). Residues 32–35 (TGST), 92–95 (DGAD), and 111–114 (KGGG) each bind substrate. Glu120 serves as the catalytic Proton acceptor. Lys138 lines the substrate pocket.

The protein belongs to the ribose 5-phosphate isomerase family. As to quaternary structure, homodimer.

It catalyses the reaction aldehydo-D-ribose 5-phosphate = D-ribulose 5-phosphate. It participates in carbohydrate degradation; pentose phosphate pathway; D-ribose 5-phosphate from D-ribulose 5-phosphate (non-oxidative stage): step 1/1. In terms of biological role, catalyzes the reversible conversion of ribose-5-phosphate to ribulose 5-phosphate. The protein is Ribose-5-phosphate isomerase A of Halorubrum lacusprofundi (strain ATCC 49239 / DSM 5036 / JCM 8891 / ACAM 34).